The sequence spans 144 residues: 3-hydroxyacyl-[acyl-carrier-protein] dehydratase FabZ (144 aa).

Histidine 48 is an active-site residue.

Belongs to the thioester dehydratase family. FabZ subfamily.

It localises to the cytoplasm. It carries out the reaction a (3R)-hydroxyacyl-[ACP] = a (2E)-enoyl-[ACP] + H2O. Its function is as follows. Involved in unsaturated fatty acids biosynthesis. Catalyzes the dehydration of short chain beta-hydroxyacyl-ACPs and long chain saturated and unsaturated beta-hydroxyacyl-ACPs. The sequence is that of 3-hydroxyacyl-[acyl-carrier-protein] dehydratase FabZ from Bacillus thuringiensis (strain Al Hakam).